A 134-amino-acid polypeptide reads, in one-letter code: Profilin-2 (134 aa).

Cysteines 13 and 118 form a disulfide. An Involved in PIP2 interaction motif is present at residues 84 to 100 (AVTRGKKGTGGITIKKT). Thr-114 carries the phosphothreonine modification.

It belongs to the profilin family. As to quaternary structure, occurs in many kinds of cells as a complex with monomeric actin in a 1:1 ratio. Phosphorylated by MAP kinases.

The protein resides in the cytoplasm. It localises to the cytoskeleton. Functionally, binds to actin and affects the structure of the cytoskeleton. At high concentrations, profilin prevents the polymerization of actin, whereas it enhances it at low concentrations. This is Profilin-2 from Olea europaea (Common olive).